The chain runs to 732 residues: uncharacterized protein (732 aa).

The TR mART core domain occupies 163–390 (YYTINELNYL…FGIVAKKKYE (228 aa)). Catalysis depends on residues R285, S309, and E354.

This is an uncharacterized protein from Acanthamoeba polyphaga mimivirus (APMV).